A 308-amino-acid polypeptide reads, in one-letter code: GTPase Era (308 aa).

An Era-type G domain is found at 14–181 (RCGFVALIGA…RRALAAAMPE (168 aa)). A G1 region spans residues 22 to 29 (GAPNVGKS). Residue 22–29 (GAPNVGKS) participates in GTP binding. The segment at 48 to 52 (QTTRA) is G2. The tract at residues 69-72 (DTPG) is G3. Residues 69–73 (DTPGI) and 131–134 (NKID) each bind GTP. The tract at residues 131 to 134 (NKID) is G4. The tract at residues 160 to 162 (VAA) is G5. The 78-residue stretch at 212 to 289 (LHQELPYQST…HLFLFVKVRD (78 aa)) folds into the KH type-2 domain.

This sequence belongs to the TRAFAC class TrmE-Era-EngA-EngB-Septin-like GTPase superfamily. Era GTPase family. In terms of assembly, monomer.

It localises to the cytoplasm. It is found in the cell inner membrane. Functionally, an essential GTPase that binds both GDP and GTP, with rapid nucleotide exchange. Plays a role in 16S rRNA processing and 30S ribosomal subunit biogenesis and possibly also in cell cycle regulation and energy metabolism. In Afipia carboxidovorans (strain ATCC 49405 / DSM 1227 / KCTC 32145 / OM5) (Oligotropha carboxidovorans), this protein is GTPase Era.